The chain runs to 501 residues: TNF receptor-associated factor 2 (501 aa).

Position 2 is an N-acetylalanine (alanine 2). Position 5 is a phosphoserine (serine 5). Threonine 7 is subject to Phosphothreonine. Serine 11 carries the post-translational modification Phosphoserine. At threonine 22 the chain carries Phosphothreonine. A Glycyl lysine isopeptide (Lys-Gly) (interchain with G-Cter in ubiquitin) cross-link involves residue lysine 31. An RING-type zinc finger spans residues 34-73; it reads CSACKNILRRPFQAQCGHRYCSFCLTSILSSGPQNCAACV. A Phosphothreonine; by PKC modification is found at threonine 117. 2 TRAF-type zinc fingers span residues 124 to 180 and 177 to 233; these read CHEG…VHYE and VHYE…ENLQ. The interval 283-293 is important for interaction with BIRC2 and BIRC3; sequence ENIVCVLNREV. Positions 298–348 form a coiled coil; that stretch reads VTAEACSRQHRLDQDKIEALSNKVQQLERSIGLKDLAMADLEQKVSELEVS. Residue lysine 320 forms a Glycyl lysine isopeptide (Lys-Gly) (interchain with G-Cter in ubiquitin) linkage. The MATH domain maps to 351–496; the sequence is DGVFIWKISD…DDAIFIKAIV (146 aa).

It belongs to the TNF receptor-associated factor family. A subfamily. In terms of assembly, homotrimer. Heterotrimer with TRAF1. Heterotrimer with TRAF3 (via TRAF domain). The domain containing the RING-type and the first TRAF-type zinc finger can also form homodimers (in vitro). Interacts with TNFRSF1B/TNFR2. Interacts with TNFRSF5/CD40. Interacts with TNFRSF4, TNFRSF7/CD27, TNFRSF8/CD30, TNFRSF9/CD137, TNFRSF11A/RANK, TNFRSF13B/TACI, TNFRSF14, TNFRSF16/NGFR, TNFRSF17/BCMA, TNFRSF18/AITR, TNFRSF19/TROY, TNFRSF19L/RELT and EDAR. Stimulation of TNF-alpha receptor TNFRSF1A leads to the formation of two distinct signaling complexes. Plasma membrane-bound complex I is composed of TNFRSF1A, TRADD, RIPK1, TRAF2 and BIRC2/c-IAP1 or BIRC3 which interacts with CHUCK/IKK-alpha, IKBKB/IKK-beta and IKBKG/IKK-gamma promoting cell survival. Subsequently, TRADD, RIPK1 and TRAF2 dissociate from TNFRSF1A and form cytoplasmic complex II with FADD and caspase CASP8 promoting cell apoptosis. Interacts with TRADD. Identified in a complex with TNFRSF1A, RIPK1 and IKBKB/IKK-beta. Interacts with RIPK2. Interacts with BIRC2 and BIRC3 N-terminus; a single BIRC2 or BIRC3 molecule interacts with a heterotrimer formed by TRAF1 and TRAF2, or a TRAF2 homotrimer. Identified in a complex composed of TRAF2, TRAF3, BIRC2 and BIRC3. Interacts with BIRC2; the interaction promotes BIRC2 stability. Interaction with BIRC2 and/or BIRC3 is essential for ubiquitination of IKBKE, degradation of NFKBIA and activation of NF-kappa-B. Within complex I, phosphorylated TRAF2 interacts (via 'Lys-63'-linked polyubiquitin chains) with CHUCK/IKK-alpha, IKBKB/IKK-beta, IKBKG/IKK-gamma TAB2, TAB3 and TAK1 in response to TNF-alpha stimulation. Within complex I, interacts with UXT isoform 1 (via TPQE motif); the interaction prevents the recruitment of FADD and CASP8/caspase 8 to complex I. Forms a complex composed of TNFRSF8/CD30 or TNFRSF1B/TNFR2, and TRAF1, TRAF2 and E3 ligase TRAIP. Within the complex, interacts with TRAIP; the interaction inhibits TRAF2-mediated NF-kappa B activation. Component of a complex composed of TANK and TBK1. Interacts with TRPC4AP. Interacts with MAP3K1/MEKK1, MAP3K5/ASK1 and MAP3K11/MLK3 in response to TNF-alpha stimulation; the interaction leads to JNK activation and interaction with MAP3K5 is inhibited by PRMT1. Component of a complex composed of MAP3K14/NIK BIRC3 and TRAF3; the interaction leads to BIRC2/3-mediated ubiquitination of TRAF3 upon CD40 engagement in a TRAF2-dependent manner. Interacts with MAP3K14/NIK in response to TNF-alpha stimulation; the interaction leads to NF-kappa B activation. Interacts with PEG3; the interaction may promote TRAF2-mediated NF-kappa B activation. Interacts with HIVEP3; the interaction may inhibit TNF-alpha-TRAF2-mediated NF-kappa B and JNK activation. Interacts with TANK/ITRAF; the interaction prevents interaction between TNFRSF1B/TNFR2 and TRAF2. Interacts with deubiquitinating enzyme CYLD; the interaction results in the deubiquitination and inactivation of TRAF2. Interacts with SIAH2; the interaction leads to TRAF2 ubiquitination and degradation. Interacts with E2 conjugating enzyme UBE2N/Ubc13, E3 ligase ITCH and RNF11 in response to TNF-alpha stimulation. Interacts with ubiquitin-editing enzyme TNFAIP3/A20 in response to TNF-alpha stimulation; the interaction promotes TRAF2 dissociation from UBE2N/Ubc13, ITCH, RNF11 and TAX1BP1 and prevents prolonged TRAF-2 ubiquitination. Interacts with TAX1BP1 in response to TNF-alpha stimulation; the interaction promotes TRAF2 dissociation from UBE2N/Ubc13 and TNFAIP3/A20, and prevents prolonged TRAF-2 ubiquitination. Interacts (via C-terminus) with EIF2AK2/PKR (via the kinase catalytic domain). Interacts with deubiquitinating enzyme USP48. Interacts with PTPN2; probably involved in TNF-mediated signaling. Interacts with Toll-like receptor TLR4/3 adapter TICAM1/TRIF; the interaction may promote TICAM1 ubiquitination. Interacts with kinase/endoribonuclease ERN1/IRE1 and DAB2IP in response to ER stress; the interaction requires DAB2IP. Interacts with ERN1/IRE1 and TAOK3 in response to ER stress; the interaction may promote TRAF2 phosphorylation. Interacts (via zinc fingers) with DAB2IP (via C-terminus PER domain) in response to TNF-alpha stimulation. Interacts with CASP8AP2/FLASH. Interacts with NFATC2IP; the interaction may repress IL-4 production in T cells. Interacts with kinase CDK9. Interacts with sphingosine kinase 1 SPHK1. Interacts with kinase TNIK. Interacts with TRAFD1. Interacts with DNA phosphodiesterase TDP2. Interacts with MAVS/IPS1. Interacts with CARD14. Interacts with GPS2. Interacts with XPNPEP3. Interacts with RIPK3. Interacts with RELL2. Interacts with LRRC19. Interacts with GAPDH; promoting TRAF2 ubiquitination. Post-translationally, phosphorylated at several serine residues within the first 128 amino acid residues. Phosphorylated at Thr-117 in response to signaling via TNF and TNFRSF1A. Phosphorylation at Thr-117 is required for 'Lys-63'-linked polyubiquitination, but not for 'Lys-48'-linked polyubiquitination. Phosphorylation at Thr-117 is important for interaction with IKKA and IKKB, activation of IKK and subsequent activation of NF-kappa-B. Undergoes both 'Lys-48'-linked and 'Lys-63'-linked polyubiquitination. Polyubiquitinated via 'Lys-63'-linked ubiquitin in response to TNF signaling; this requires prior phosphorylation at Thr-117. 'Lys-63'-linked polyubiquitination promotes TRAF2-mediated activation of NF-kappa-B. Can be polyubiquitinated at several Lys residues via 'Lys-48'-linked ubiquitin chains in response to TNF signaling, leading to proteasomal degradation. Autoubiquitinated, leading to its subsequent proteasomal degradation. Polyubiquitinated by BIRC2 and SIAH2, leading to its subsequent proteasomal degradation. Not ubiquitinated by BIRC3 or SIAH1. Deubiquitinated by CYLD, a protease that specifically cleaves 'Lys-63'-linked polyubiquitin chains. Ubiquination is inhibited by LRRC19; inhiits proteasomal degradation. Ubiquitinated at Lys-320 by the SCF(FBXL2) complex, leading to its degradation by the proteasome. Ubiquitinated by E3 ubiquitin-protein ligase complex containing FBXO7; leading to repression of NF-kappa-B signaling. Isoform 1 and isoform 2 are expressed in spleen, adipose tissues, skeletal muscles, thymus, testis, heart, lung, brain. Isoform 2 is very weakly expressed in heart, lung and brain.

It localises to the cytoplasm. It carries out the reaction S-ubiquitinyl-[E2 ubiquitin-conjugating enzyme]-L-cysteine + [acceptor protein]-L-lysine = [E2 ubiquitin-conjugating enzyme]-L-cysteine + N(6)-ubiquitinyl-[acceptor protein]-L-lysine.. It participates in protein modification; protein ubiquitination. With respect to regulation, has very low E3 ubiquitin ligase activity in the absence of sphingosine-1-phosphate. E3 ubiquitin ligase activity is strongly activated by cytoplasmic sphingosine-1-phosphate. Functionally, E3 ubiquitin-protein ligase that regulates activation of NF-kappa-B and JNK and plays a central role in the regulation of cell survival and apoptosis. Catalyzes 'Lys-63'-linked ubiquitination of target proteins, such as BIRC3, IKBKE, MLST8, RIPK1 and TICAM1. Is an essential constituent of several E3 ubiquitin-protein ligase complexes, where it promotes the ubiquitination of target proteins by bringing them into contact with other E3 ubiquitin ligases. Regulates BIRC2 and BIRC3 protein levels by inhibiting their autoubiquitination and subsequent degradation; this does not depend on the TRAF2 RING-type zinc finger domain. Plays a role in mediating activation of NF-kappa-B by EIF2AK2/PKR. In complex with BIRC2 or BIRC3, promotes ubiquitination of IKBKE. Acts as a regulator of mTORC1 and mTORC2 assembly by mediating 'Lys-63'-linked ubiquitination of MLST8, thereby inhibiting formation of the mTORC2 complex, while facilitating assembly of the mTORC1 complex. Required for normal antibody isotype switching from IgM to IgG. This is TNF receptor-associated factor 2 (Traf2) from Mus musculus (Mouse).